The chain runs to 834 residues: MNSDLEYLEDGFDPNSMKVATLRRILVENNVDFPSNARKNALVGLFDEKVKPQIPQLRKMYLNVRPSDEGIVKMDRPSSSPSIASPRRSRRARREKSASPMAKQFKKNRILDDVSNDDDDDDDDDDDNDKKDDPLIVPSGTDTDEVDDEEDDVITSSSNKSDTNDFQQNSDTRKKRKDPDSDDWSESNSKENKIDNKHLNLLSSDSEIEQDYQKAKKRKTSDLNQEHGNGSAILGKLSVKTPIKNTNRKPVSMDNFNDSLTSSGTENDPFVPNIRHNPKELGTANGTGHSTPLSKLKVSASFADKLPQKEVPSTILVPEVEQQEPSQSERTPSLFSSEGSGSESEAPLLPEITTPGPHQPMGNTSNNVVEMIDTDSSNLVSDEDEVLVPTRIETPQLPTEKDVEKCEARVQELQEEVNEQLEHENGSEFDVKQGSGKVGNRHKFKRALKFLSKSLLALFLFCIFIVIPLLFGLWYREQRLLIGYCGHEVPSHRVSGNSFEFIQKLDNLLQDYRPKCIPCPPNGICYPYLKLKCKPDYKLAPSRLDFLEIIPAQGKCVKDDKKQQLVSEVVEKSLEFLRAKNAQISCGDGKDDIESGMTEDALYQIFNEARAPWIRDDEFEDLWIQVIKDLTEEPEILWRQLSPTDNNIGGNSNNIIKTNDVPRQKRHLPEKFISKTRNFRSTSKKYIGMKCRFEREIYQTYKKFQRPIWLMFLLIVISKVIEIKLKNYYRKKARIEELVTQTMEKLKFQKIKSMSDPKENAYLSIVQLRDIFLSDIVDLKYKNQLWSEVVKYLEHNNSNIKSNLTEIRGEIMKCWEWIGPMELNEPKDSAENKI.

The disordered stretch occupies residues 68-292 (DEGIVKMDRP…TANGTGHSTP (225 aa)). Positions 77-86 (PSSSPSIASP) are enriched in low complexity. Phosphoserine is present on residues Ser78, Ser80, and Ser85. 2 stretches are compositionally biased toward acidic residues: residues 114 to 127 (VSNDDDDDDDDDDD) and 142 to 153 (DTDEVDDEEDDV). Positions 154–170 (ITSSSNKSDTNDFQQNS) are enriched in polar residues. Ser181 carries the phosphoserine modification. The span at 188–198 (NSKENKIDNKH) shows a compositional bias: basic and acidic residues. Phosphoserine occurs at positions 203, 204, and 206. Residues 243-266 (IKNTNRKPVSMDNFNDSLTSSGTE) show a composition bias toward polar residues. The residue at position 301 (Ser301) is a Phosphoserine. The disordered stretch occupies residues 307-364 (PQKEVPSTILVPEVEQQEPSQSERTPSLFSSEGSGSESEAPLLPEITTPGPHQPMGNT). Composition is skewed to low complexity over residues 317 to 329 (VPEVEQQEPSQSE) and 336 to 345 (SSEGSGSESE). Residue Thr394 is modified to Phosphothreonine. Residue Ser427 is modified to Phosphoserine. 2 helical membrane passes run 455 to 475 (LLALFLFCIFIVIPLLFGLWY) and 708 to 728 (IWLMFLLIVISKVIEIKLKNY).

The protein resides in the nucleus inner membrane. Functionally, plays a role in sister chromatid separation. The protein is Inner nuclear membrane protein SRC1 (SRC1) of Saccharomyces cerevisiae (strain ATCC 204508 / S288c) (Baker's yeast).